The chain runs to 598 residues: Probable pectinesterase/pectinesterase inhibitor 34 (598 aa).

Residues 1-40 (MGYERLGPSGATGSVTTSTTTAPILNQVSTSEQPENNNRR) form a disordered region. Over residues 7–23 (GPSGATGSVTTSTTTAP) the composition is skewed to low complexity. Polar residues predominate over residues 24-36 (ILNQVSTSEQPEN). Residues 46–66 (VVSSIVLAISLILAAAIFAGV) form a helical membrane-spanning segment. The segment at 81–232 (RKPSQAISKA…SELVSNCLAI (152 aa)) is pectinesterase inhibitor 34. The interval 284–582 (DIIVSKDGNG…FTVAEFIYGS (299 aa)) is pectinesterase 34. Positions 360 and 390 each coordinate substrate. D413 acts as the Proton donor; for pectinesterase activity in catalysis. Residues C427 and C447 are joined by a disulfide bond. D434 (nucleophile; for pectinesterase activity) is an active-site residue. Substrate-binding residues include R502 and W504.

This sequence in the N-terminal section; belongs to the PMEI family. The protein in the C-terminal section; belongs to the pectinesterase family. In terms of tissue distribution, expressed in siliques.

The protein resides in the membrane. It catalyses the reaction [(1-&gt;4)-alpha-D-galacturonosyl methyl ester](n) + n H2O = [(1-&gt;4)-alpha-D-galacturonosyl](n) + n methanol + n H(+). It participates in glycan metabolism; pectin degradation; 2-dehydro-3-deoxy-D-gluconate from pectin: step 1/5. Functionally, acts in the modification of cell walls via demethylesterification of cell wall pectin. The sequence is that of Probable pectinesterase/pectinesterase inhibitor 34 (PME34) from Arabidopsis thaliana (Mouse-ear cress).